A 954-amino-acid polypeptide reads, in one-letter code: Glycine dehydrogenase (decarboxylating) (954 aa).

Residue lysine 704 is modified to N6-(pyridoxal phosphate)lysine.

Belongs to the GcvP family. As to quaternary structure, the glycine cleavage system is composed of four proteins: P, T, L and H. It depends on pyridoxal 5'-phosphate as a cofactor.

It catalyses the reaction N(6)-[(R)-lipoyl]-L-lysyl-[glycine-cleavage complex H protein] + glycine + H(+) = N(6)-[(R)-S(8)-aminomethyldihydrolipoyl]-L-lysyl-[glycine-cleavage complex H protein] + CO2. Its function is as follows. The glycine cleavage system catalyzes the degradation of glycine. The P protein binds the alpha-amino group of glycine through its pyridoxal phosphate cofactor; CO(2) is released and the remaining methylamine moiety is then transferred to the lipoamide cofactor of the H protein. This chain is Glycine dehydrogenase (decarboxylating), found in Vibrio vulnificus (strain YJ016).